Reading from the N-terminus, the 514-residue chain is Triacylglyceride transporter MAB_2807 (514 aa).

The next 11 helical transmembrane spans lie at 19–39, 58–78, 88–108, 118–138, 157–177, 178–198, 210–230, 239–259, 278–298, 316–336, and 344–364; these read IAIGAGSLAVLLGALDTYVVV, QVTPIVTGYLLGYIAAMPLLG, LILQLALAGFAIGSVITALST, VIQGVASGALLPVTLALGADL, LGSVLGPLYGVLCVWLFGSWT, AIFWVNVPLAIIAIVLVQFSV, VDVVGGALLAVALGLLVVGLY, LPEWALPVLSGSGVAFLAFIL, PFFAALAASLAAGAALMVTLV, VFLLSRFLVALPIGAVIGGWL, and IIAVIGMLIAAFGYYLISGWP. The tract at residues 371–380 is beta-hairpin; that stretch reads VHNFGFFTLP. 3 helical membrane-spanning segments follow: residues 385 to 405, 420 to 440, and 485 to 505; these read DLVVAGIGLGLVIGPLSSAAL, VVVARMTGMLIGMAALGGWGI, and MFAITAVVCVIAAVIAIFVGS.

The protein belongs to the major facilitator superfamily. P55 (TC 2.A.1.3.34) family.

It is found in the cell inner membrane. In terms of biological role, in association with lipoprotein LprG probably transports triacyglycerides (TAG) across the inner cell membrane into the periplasm; TAG probably regulates lipid metabolism and growth regulation and plays a structural role in the outer membrane. TAG (and maybe other lipids) enters the central cavity of the P55 transporter from within the cell inner membrane via clefts on the cytoplasmic face of P55 between TM5-TM8 and TM2-TM11. From there the lipid is probably transferred to the hydrophobic cavity of LprG. Involved in drug susceptibilty, its expression partially complements the antibiotic susceptibilty of a double lprG-mfs deletion. Probably does not function as a bona fide drug efflux pump, but instead plays a role in outer membrane biogenesis. Probably required with LprG for normal surface localization of lipoarabinomannan (LAM). This chain is Triacylglyceride transporter MAB_2807, found in Mycobacteroides abscessus (strain ATCC 19977 / DSM 44196 / CCUG 20993 / CIP 104536 / JCM 13569 / NCTC 13031 / TMC 1543 / L948) (Mycobacterium abscessus).